The following is a 150-amino-acid chain: UPF0178 protein Reut_B5138 (150 aa).

This sequence belongs to the UPF0178 family.

The polypeptide is UPF0178 protein Reut_B5138 (Cupriavidus pinatubonensis (strain JMP 134 / LMG 1197) (Cupriavidus necator (strain JMP 134))).